Consider the following 101-residue polypeptide: Protein snet-1 (101 aa).

The N-terminal stretch at 1-20 is a signal peptide; that stretch reads MARFTPLLMILLALVPLYYS.

In terms of processing, may be degraded by the nep-2 peptidase. As to expression, expressed in coelomocytes, the ASK sensory neurons and interneurons AIB, AIM and PVQ.

It localises to the secreted. The protein resides in the perikaryon. Functionally, negatively regulates chemotaxis and olfactory plasticity which is the change from positive chemotaxis to dispersal after prolonged exposure to an odorant. May be down-regulated in response to pheromone exposure, resulting in promotion of olfactory plasticity. This chain is Protein snet-1, found in Caenorhabditis elegans.